Here is a 647-residue protein sequence, read N- to C-terminus: Acetyl-coenzyme A synthetase (647 aa).

CoA-binding positions include 190–193 (RGGK), threonine 310, and asparagine 334. Residues 386–388 (GEP), 410–415 (DTWWQT), aspartate 499, and arginine 514 contribute to the ATP site. Serine 522 provides a ligand contact to CoA. Arginine 525 contacts ATP. The Mg(2+) site is built by valine 536, histidine 538, and valine 541. Arginine 583 is a binding site for CoA. Lysine 608 is subject to N6-acetyllysine.

Belongs to the ATP-dependent AMP-binding enzyme family. Mg(2+) serves as cofactor. Post-translationally, acetylated. Deacetylation by the SIR2-homolog deacetylase activates the enzyme.

It catalyses the reaction acetate + ATP + CoA = acetyl-CoA + AMP + diphosphate. Its function is as follows. Catalyzes the conversion of acetate into acetyl-CoA (AcCoA), an essential intermediate at the junction of anabolic and catabolic pathways. AcsA undergoes a two-step reaction. In the first half reaction, AcsA combines acetate with ATP to form acetyl-adenylate (AcAMP) intermediate. In the second half reaction, it can then transfer the acetyl group from AcAMP to the sulfhydryl group of CoA, forming the product AcCoA. The protein is Acetyl-coenzyme A synthetase of Xanthomonas axonopodis pv. citri (strain 306).